Reading from the N-terminus, the 105-residue chain is MGPQQDRSAAKPYANGSTAAAAAAGRKENNKVVRYRECQRNHAASIGGHAVDGCREFMASGAEGTAAALLCAACGCHRSFHRREVEAAAAECDCSSDTSSGTGRR.

The disordered stretch occupies residues 1–29 (MGPQQDRSAAKPYANGSTAAAAAAGRKEN). The ZF-HD dimerization-type; degenerate zinc finger occupies 35-84 (YRECQRNHAASIGGHAVDGCREFMASGAEGTAAALLCAACGCHRSFHRRE).

As to quaternary structure, homo- and heterodimers.

The protein resides in the cytoplasm. In terms of biological role, inhibits zinc finger homeodomain (ZHD) transcription factors, by interacting with them to prevent both their nuclear localization and their DNA-binding properties. This Oryza sativa subsp. indica (Rice) protein is Mini zinc finger protein 1 (MIF1).